We begin with the raw amino-acid sequence, 1300 residues long: MSRRKQAKPQHLKSDEELLPPDGAPEHAAPGEGAEDADSGPESRSGGEETSVCEKCCAEFFKWADFLEHQRSCTKLPPVLIVHEDAPAPPPEDFPEPSPASSPSERAESEAAEEAGAEGAEGEARPVEKEAEPMDAEPAGDTRAPRPPPAAPAPPTPAYGAPSTNVTLEALLSTKVAVAQFSQGARAAGGSGAGGGVAAAAVPLILEQLMALQQQQIHQLQLIEQIRSQVALMQRPPPRPSLSPAAAPSAPGPAPSQLPGLAALPLSAGAPAAAIAGSGPAAPAAFEGAQPLSRPESGASTPGGPAEPSAPAAPSAAPAPAAPAPAPAPQSAASSQPQSASTPPALAPGSLLGAAPGLPSPLLPQTSASGVIFPNPLVSIAATANALDPLSALMKHRKGKPPNVSVFEPKASAEDPFFKHKCRFCAKVFGSDSALQIHLRSHTGERPFKCNICGNRFSTKGNLKVHFQRHKEKYPHIQMNPYPVPEYLDNVPTCSGIPYGMSLPPEKPVTTWLDSKPVLPTVPTSVGLQLPPTVPGAHGYADSPSATPASRSPQRPSPASSECASLSPGLNHVESGVSATAESPQSLLGGPPLTKAEPVSLPCTNARAGDAPVGAQASAAPTSVDGAPTSLGSPGLPAVSEQFKAQFPFGGLLDSMQTSETSKLQQLVENIDKKMTDPNQCVICHRVLSCQSALKMHYRTHTGERPFKCKICGRAFTTKGNLKTHFGVHRAKPPLRVQHSCPICQKKFTNAVVLQQHIRMHMGGQIPNTPLPEGFQDAMDSELAYDDKNAETLSSYDDDMDENSMEDDAELKDAATDPAKPLLSYAGSCPPSPPSVISSIAALENQMKMIDSVMSCQQLTGLKSVENGSGESDRLSNDSSSAVGDLESRSAGSPALSESSSSQALSPAPSNGESFRSKSPGLGAPEEPQEIPLKTERPDSPAAAPGSGGAPGRAGIKEEAPFSLLFLSRERGKCPSTVCGVCGKPFACKSALEIHYRSHTKERPFVCALCRRGCSTMGNLKQHLLTHRLKELPSQLFDPNFALGPSQSTPSLISSAAPTMIKMEVNGHGKAMALGEGPPLPAGVQVPAGPQTVMGPGLAPMLAPPPRRTPKQHNCQSCGKTFSSASALQIHERTHTGEKPFGCTICGRAFTTKGNLKVHMGTHMWNNAPARRGRRLSVENPMALLGGDALKFSEMFQKDLAARAMNVDPSFWNQYAAAITNGLAMKNNEISVIQNGGIPQLPVSLGGSALPPLGSMASGMDKARTGSSPPIVSLDKASSETAASRPFTRFIEDNKEIGIN.

Basic residues predominate over residues 1–11; that stretch reads MSRRKQAKPQH. 4 disordered regions span residues 1–51, 84–162, 234–258, and 277–352; these read MSRR…EETS, EDAP…YGAP, QRPPPRPSLSPAAAPSAPGPAPSQL, and GSGP…GSLL. A C2H2-type 1; atypical zinc finger spans residues 51–73; the sequence is SVCEKCCAEFFKWADFLEHQRSC. Pro residues predominate over residues 87-100; that stretch reads PAPPPEDFPEPSPA. Phosphoserine is present on S109. Basic and acidic residues predominate over residues 122 to 132; sequence GEARPVEKEAE. Pro residues predominate over residues 145–157; it reads PRPPPAAPAPPTP. 2 stretches are compositionally biased toward low complexity: residues 277-319 and 329-352; these read GSGP…AAPA and PQSAASSQPQSASTPPALAPGSLL. 2 C2H2-type zinc fingers span residues 420–442 and 448–470; these read HKCRFCAKVFGSDSALQIHLRSH and FKCNICGNRFSTKGNLKVHFQRH. The interval 523-633 is disordered; that stretch reads PTSVGLQLPP…VDGAPTSLGS (111 aa). Low complexity predominate over residues 543-561; that stretch reads SPSATPASRSPQRPSPASS. Positions 577–586 are enriched in polar residues; it reads VSATAESPQS. 3 consecutive C2H2-type zinc fingers follow at residues 679–701, 707–729, and 739–761; these read NQCVICHRVLSCQSALKMHYRTH, FKCKICGRAFTTKGNLKTHFGVH, and HSCPICQKKFTNAVVLQQHIRMH. Positions 864–955 are disordered; sequence SVENGSGESD…GSGGAPGRAG (92 aa). Over residues 889 to 910 the composition is skewed to low complexity; the sequence is RSAGSPALSESSSSQALSPAPS. The residue at position 919 (S919) is a Phosphoserine. 4 C2H2-type zinc fingers span residues 977 to 999, 1005 to 1027, 1113 to 1135, and 1141 to 1163; these read TVCGVCGKPFACKSALEIHYRSH, FVCALCRRGCSTMGNLKQHLLTH, HNCQSCGKTFSSASALQIHERTH, and FGCTICGRAFTTKGNLKVHMGTH. Phosphoserine is present on S1177. Residues 1259-1279 form a disordered region; that stretch reads GMDKARTGSSPPIVSLDKASS.

It belongs to the sal C2H2-type zinc-finger protein family. In terms of tissue distribution, widely expressed in adult with highest levels in heart. Expressed in fetal brain (in neurons of hippocampus, cortex, mediodorsal and ventrolateral thalamic nuclei, putamen, cerebellum and brainstem).

Its subcellular location is the nucleus. Functionally, probable transcription factor. In Homo sapiens (Human), this protein is Sal-like protein 3 (SALL3).